Here is a 394-residue protein sequence, read N- to C-terminus: Putative fimbrial assembly protein FimD, serogroup D (394 aa).

The polypeptide is Putative fimbrial assembly protein FimD, serogroup D (fimD) (Dichelobacter nodosus (Bacteroides nodosus)).